Consider the following 554-residue polypeptide: Dihydroxy-acid dehydratase (554 aa).

Residue Asp78 participates in Mg(2+) binding. Cys119 provides a ligand contact to [2Fe-2S] cluster. Residues Asp120 and Lys121 each contribute to the Mg(2+) site. Lys121 is subject to N6-carboxylysine. Cys191 lines the [2Fe-2S] cluster pocket. Residue Glu444 participates in Mg(2+) binding. Ser470 acts as the Proton acceptor in catalysis.

Belongs to the IlvD/Edd family. Homodimer. [2Fe-2S] cluster serves as cofactor. The cofactor is Mg(2+).

It catalyses the reaction (2R)-2,3-dihydroxy-3-methylbutanoate = 3-methyl-2-oxobutanoate + H2O. The enzyme catalyses (2R,3R)-2,3-dihydroxy-3-methylpentanoate = (S)-3-methyl-2-oxopentanoate + H2O. The protein operates within amino-acid biosynthesis; L-isoleucine biosynthesis; L-isoleucine from 2-oxobutanoate: step 3/4. It participates in amino-acid biosynthesis; L-valine biosynthesis; L-valine from pyruvate: step 3/4. Functionally, functions in the biosynthesis of branched-chain amino acids. Catalyzes the dehydration of (2R,3R)-2,3-dihydroxy-3-methylpentanoate (2,3-dihydroxy-3-methylvalerate) into 2-oxo-3-methylpentanoate (2-oxo-3-methylvalerate) and of (2R)-2,3-dihydroxy-3-methylbutanoate (2,3-dihydroxyisovalerate) into 2-oxo-3-methylbutanoate (2-oxoisovalerate), the penultimate precursor to L-isoleucine and L-valine, respectively. This chain is Dihydroxy-acid dehydratase, found in Nitratidesulfovibrio vulgaris (strain ATCC 29579 / DSM 644 / CCUG 34227 / NCIMB 8303 / VKM B-1760 / Hildenborough) (Desulfovibrio vulgaris).